The chain runs to 585 residues: Proline--tRNA ligase (585 aa).

It belongs to the class-II aminoacyl-tRNA synthetase family. ProS type 1 subfamily. Homodimer.

It localises to the cytoplasm. It catalyses the reaction tRNA(Pro) + L-proline + ATP = L-prolyl-tRNA(Pro) + AMP + diphosphate. Its function is as follows. Catalyzes the attachment of proline to tRNA(Pro) in a two-step reaction: proline is first activated by ATP to form Pro-AMP and then transferred to the acceptor end of tRNA(Pro). As ProRS can inadvertently accommodate and process non-cognate amino acids such as alanine and cysteine, to avoid such errors it has two additional distinct editing activities against alanine. One activity is designated as 'pretransfer' editing and involves the tRNA(Pro)-independent hydrolysis of activated Ala-AMP. The other activity is designated 'posttransfer' editing and involves deacylation of mischarged Ala-tRNA(Pro). The misacylated Cys-tRNA(Pro) is not edited by ProRS. The polypeptide is Proline--tRNA ligase (Mycolicibacterium vanbaalenii (strain DSM 7251 / JCM 13017 / BCRC 16820 / KCTC 9966 / NRRL B-24157 / PYR-1) (Mycobacterium vanbaalenii)).